The primary structure comprises 925 residues: Glutamate receptor 3.1 (925 aa).

A signal peptide spans 1 to 25; sequence MLSSMNWVLLSFIIVLGGGLLLSEG. At 26 to 591 the chain is on the extracellular side; the sequence is ASSSRPPVIK…NPWAFLRPFT (566 aa). N-linked (GlcNAc...) asparagine glycans are attached at residues Asn-309, Asn-341, Asn-359, Asn-419, Asn-437, and Asn-488. A helical transmembrane segment spans residues 592–612; the sequence is LPMWAVTASFFVIVGAAIWIL. At 613 to 621 the chain is on the cytoplasmic side; it reads EHRINDEFR. Residues 622-642 form a helical membrane-spanning segment; the sequence is GPPRRQIITILWFTFSTMFFS. Residues 643 to 653 are Cytoplasmic-facing; that stretch reads HRETTVSTLGR. Residues 654-674 form a helical membrane-spanning segment; the sequence is MVLLIWLFVVLIITSSYTASL. The Extracellular portion of the chain corresponds to 675 to 831; the sequence is TSILTVQQLN…GDSEQLNVHS (157 aa). Asn-738 and Asn-812 each carry an N-linked (GlcNAc...) asparagine glycan. A helical transmembrane segment spans residues 832–852; that stretch reads FWGMFLVVGIACLVALFIHFF. Residues 853 to 925 lie on the Cytoplasmic side of the membrane; that stretch reads KIIRDFCKDT…ISRTASRRPI (73 aa). The segment at 897-925 is disordered; that stretch reads KRRLKRKRNNDHSMNANSIISRTASRRPI. Polar residues predominate over residues 908–919; it reads HSMNANSIISRT.

This sequence belongs to the glutamate-gated ion channel (TC 1.A.10.1) family. As to quaternary structure, may form heteromers. In terms of tissue distribution, expressed predominantly in roots. Firt detected in the vascular tissues of the cotyledons, and later in the vasculature of all organs. In leaves, preferentially expressed in guard cells.

Its subcellular location is the membrane. Glutamate-gated receptor that probably acts as a non-selective cation channel. May be involved in light-signal transduction and calcium homeostasis via the regulation of calcium influx into cells. Required for the long-term calcium oscillation-regulated stomatal movements. This is Glutamate receptor 3.1 (GLR3.1) from Arabidopsis thaliana (Mouse-ear cress).